Consider the following 229-residue polypeptide: Transmembrane 4 L6 family member 20 (229 aa).

The Lumenal segment spans residues 1–14 (MTCCEGWTSCNGFS). The helical transmembrane segment at 15-35 (LLVLLLLGVVLNAIPLIVSLV) threads the bilayer. Residues 36–44 (EEDQFSQNP) lie on the Cytoplasmic side of the membrane. The helical transmembrane segment at 45 to 65 (ISCFEWWFPGIIGAGLMAIPA) threads the bilayer. At 66-83 (TTMSLTARKRACCNNRTG) the chain is on the lumenal side. A helical membrane pass occupies residues 84 to 104 (MFLSSLFSVITVIGALYCMLI). The Cytoplasmic segment spans residues 105-185 (SIQALLKGPL…HFDSEENKHR (81 aa)). A helical membrane pass occupies residues 186–206 (LIHFSVFLGLLLVGILEVLFG). Residues 207–229 (LSQIVIGFLGCLCGVSKRRSQIV) lie on the Lumenal side of the membrane.

Belongs to the L6 tetraspanin family. In terms of processing, glycosylated at Asn-132, Asn-148 and Asn-163 in presence of ceramide which inverts the orientation of TM4SF20 in membranes exposing these residues to the endoplasmic reticulum lumen. Post-translationally, cleaved by signal peptidase at Ser-14 but the peptide does not act as a signal peptide. Cleavage is inhibited by ceramide which inverts the orientation of TM4SF20 in membranes exposing the N-terminus to the cytosol and not to the endoplasmic reticulum lumen. Expressed in the brain, with high levels in the parietal lobe, hippocampus, pons, white matter and cerebellum.

The protein localises to the membrane. Its subcellular location is the endoplasmic reticulum membrane. Its function is as follows. Polytopic transmembrane protein that inhibits regulated intramembrane proteolysis (RIP) of CREB3L1, inhibiting its activation and the induction of collagen synthesis. In response to ceramide, which alters TM4SF20 membrane topology, stimulates RIP activation of CREB3L1. Ceramide reverses the direction through which transmembrane helices are translocated into the endoplasmic reticulum membrane during translation of TM4SF20, this mechanism is called 'regulated alternative translocation' (RAT) and regulates the function of the transmembrane protein. The chain is Transmembrane 4 L6 family member 20 (TM4SF20) from Homo sapiens (Human).